The following is a 688-amino-acid chain: Glycine--tRNA ligase beta subunit (688 aa).

Belongs to the class-II aminoacyl-tRNA synthetase family. In terms of assembly, tetramer of two alpha and two beta subunits.

Its subcellular location is the cytoplasm. It catalyses the reaction tRNA(Gly) + glycine + ATP = glycyl-tRNA(Gly) + AMP + diphosphate. This chain is Glycine--tRNA ligase beta subunit, found in Histophilus somni (strain 2336) (Haemophilus somnus).